Consider the following 334-residue polypeptide: MDAFDAIPDPVVIDILNRVGDVKTLIRCRSVSKRFNSLATQSESLLLQLDQILGATESDSEIDSPIASFFRSLFKSIHGLLPPIFSKPANSDEILTRSPKTPAQILSGFERIRNLEVELYGGDVKLEKGAAVKWKAEFGKTLKSCVIVAFRSATVNTSAATEAAAVVDGVVESDSEFVCGLKTRVVWTISALMAASTRHYLMRDLVKDHKEMEKLIVRDSDGEGTVVMDAAGMKEYRETEVRGDNKESERVGERTVVPSVRMSMRHAPSLMLKSGICLEAATLVVVRPTGVASDDNDVELVTEAFAGDGDDCMYGEAVTALLKRRRNVLEMNSF.

The region spanning 1 to 49 (MDAFDAIPDPVVIDILNRVGDVKTLIRCRSVSKRFNSLATQSESLLLQL) is the F-box domain.

In terms of assembly, part of a SCF (ASK-cullin-F-box) protein ligase complex. Interacts with SKP1A/ASK1, SKP1B/ASK2, ASK11 and ASK13.

It is found in the nucleus. Its pathway is protein modification; protein ubiquitination. Component of SCF(ASK-cullin-F-box) E3 ubiquitin ligase complexes, which may mediate the ubiquitination and subsequent proteasomal degradation of target proteins. Involved in the control of basipetal and acropetal auxin transport by promoting the distribution and expression of the auxin transporter PIN2. Promotes cytokinin-mediated cell expansion in the root elongation and differentiation zone, without affecting root cell division. The protein is F-box protein AUF1 of Arabidopsis thaliana (Mouse-ear cress).